We begin with the raw amino-acid sequence, 345 residues long: tRNA pseudouridine synthase B (345 aa).

Catalysis depends on D39, which acts as the Nucleophile.

It belongs to the pseudouridine synthase TruB family. Type 1 subfamily.

It catalyses the reaction uridine(55) in tRNA = pseudouridine(55) in tRNA. Responsible for synthesis of pseudouridine from uracil-55 in the psi GC loop of transfer RNAs. This Rickettsia rickettsii (strain Iowa) protein is tRNA pseudouridine synthase B.